A 331-amino-acid polypeptide reads, in one-letter code: L-lactate dehydrogenase A chain (331 aa).

NAD(+)-binding positions include 29–57 and Arg-98; that span reads GMVG…MEDK. Substrate-binding residues include Arg-105, Asn-137, and Arg-168. Asn-137 serves as a coordination point for NAD(+). Catalysis depends on His-192, which acts as the Proton acceptor. Thr-247 is a binding site for substrate.

The protein belongs to the LDH/MDH superfamily. LDH family. As to quaternary structure, homotetramer.

The protein resides in the cytoplasm. It carries out the reaction (S)-lactate + NAD(+) = pyruvate + NADH + H(+). Its pathway is fermentation; pyruvate fermentation to lactate; (S)-lactate from pyruvate: step 1/1. Functionally, interconverts simultaneously and stereospecifically pyruvate and lactate with concomitant interconversion of NADH and NAD(+). This chain is L-lactate dehydrogenase A chain (ldha), found in Notothenia neglecta (Yellowbelly rockcod).